A 100-amino-acid chain; its full sequence is Integration host factor subunit alpha (100 aa).

It belongs to the bacterial histone-like protein family. In terms of assembly, heterodimer of an alpha and a beta chain.

In terms of biological role, this protein is one of the two subunits of integration host factor, a specific DNA-binding protein that functions in genetic recombination as well as in transcriptional and translational control. The chain is Integration host factor subunit alpha from Cereibacter sphaeroides (strain ATCC 17023 / DSM 158 / JCM 6121 / CCUG 31486 / LMG 2827 / NBRC 12203 / NCIMB 8253 / ATH 2.4.1.) (Rhodobacter sphaeroides).